The following is a 146-amino-acid chain: MSIPFSNTHYRIPQGFGNLLEGLTREILREQPDNIPAFAAAYFENLLEKREKTNFDPAEWGAKVDDRFYNNHAFQEHESEKCEAEEKSQSVTEEETPVLTIDSEDDKDKEEMAALKIQAAFRGHLAREDVKKIRTNKAEEETEENN.

The span at 76-88 (EHESEKCEAEEKS) shows a compositional bias: basic and acidic residues. Positions 76–109 (EHESEKCEAEEKSQSVTEEETPVLTIDSEDDKDK) are disordered. A compositionally biased stretch (acidic residues) spans 92 to 108 (TEEETPVLTIDSEDDKD). The region spanning 110–139 (EEMAALKIQAAFRGHLAREDVKKIRTNKAE) is the IQ domain.

As to quaternary structure, homodimer. May interact with ROPN1. Post-translationally, the N-terminus is blocked. In terms of tissue distribution, testis- and sperm-specific.

It localises to the membrane. Functionally, sperm surface zona pellucida binding protein. Helps to bind spermatozoa to the zona pellucida with high affinity. Might function in binding zona pellucida and carbohydrates. The protein is Sperm surface protein Sp17 (SPA17) of Oryctolagus cuniculus (Rabbit).